A 99-amino-acid chain; its full sequence is Large ribosomal subunit protein bL28 (99 aa).

This sequence belongs to the bacterial ribosomal protein bL28 family.

This chain is Large ribosomal subunit protein bL28, found in Caulobacter vibrioides (strain ATCC 19089 / CIP 103742 / CB 15) (Caulobacter crescentus).